Consider the following 116-residue polypeptide: Immunoglobulin heavy variable 2-4 (116 aa).

The signal sequence occupies residues 1 to 19 (MAVLVLLFCLVTFPSCVLS). The region spanning 20-116 (QVQLKQSGPG…DDTAIYYCAK (97 aa)) is the Ig-like domain. The cysteines at positions 41 and 114 are disulfide-linked.

The sequence is that of Immunoglobulin heavy variable 2-4 from Mus musculus (Mouse).